A 1234-amino-acid chain; its full sequence is PAN2-PAN3 deadenylation complex catalytic subunit PAN2 (1234 aa).

The interval 12–32 (LKNSNNNSNSNSSSNNSSNGV) is disordered. Residues 14–30 (NSNNNSNSNSSSNNSSN) show a composition bias toward low complexity. WD repeat units follow at residues 176-213 (NHTG…SIKT), 272-315 (AFPA…VYHA), and 342-381 (QQQP…TLSK). The segment at 323–346 (PLPPAGSSAAQQQKQQQQQQQQPH) is disordered. A compositionally biased stretch (low complexity) spans 333 to 344 (QQQKQQQQQQQQ). Positions 383 to 537 (FVNFPQEIER…DSIFQCQNDE (155 aa)) are linker. The USP domain occupies 538–946 (KIPNCYSRLQ…KPVIVIYQEV (409 aa)). Residues 751-775 (PNTQQDQQQQQQQQQQQQQQQQPTN) form a disordered region. A compositionally biased stretch (low complexity) spans 754-772 (QQDQQQQQQQQQQQQQQQQ). A divalent metal cation-binding residues include Asp-1004, Glu-1006, Asp-1138, and Asp-1191. An Exonuclease domain is found at 1072 to 1199 (GEAFIDDYIV…EDARTALLLY (128 aa)).

It belongs to the peptidase C19 family. PAN2 subfamily. Forms a heterotrimer with an asymmetric homodimer of the regulatory subunit PAN3 to form the poly(A)-nuclease (PAN) deadenylation complex. A divalent metal cation is required as a cofactor.

It is found in the cytoplasm. It catalyses the reaction Exonucleolytic cleavage of poly(A) to 5'-AMP.. Its activity is regulated as follows. Positively regulated by the regulatory subunit PAN3. Functionally, catalytic subunit of the poly(A)-nuclease (PAN) deadenylation complex, one of two cytoplasmic mRNA deadenylases involved in mRNA turnover. PAN specifically shortens poly(A) tails of RNA and the activity is stimulated by poly(A)-binding protein PAB1. PAN deadenylation is followed by rapid degradation of the shortened mRNA tails by the CCR4-NOT complex. Deadenylated mRNAs are then degraded by two alternative mechanisms, namely exosome-mediated 3'-5' exonucleolytic degradation, or deadenylation-dependent mRNA decaping and subsequent 5'-3' exonucleolytic degradation by XRN1. May also be involved in post-transcriptional maturation of mRNA poly(A) tails. In Lodderomyces elongisporus (strain ATCC 11503 / CBS 2605 / JCM 1781 / NBRC 1676 / NRRL YB-4239) (Yeast), this protein is PAN2-PAN3 deadenylation complex catalytic subunit PAN2.